Consider the following 328-residue polypeptide: MSKNRDPLLANLNAFKSKVKSAPVIAPAKVGQKKTNDTVITIDGNTRKRTASERAQENTLNSAKNPVLVDIKKEAGSNSSNAISLDDDDDDEDFGSSPSKKVRPGSIAAAALQANQTDISKSHDSSKLLWATEYIQKKGKPVLVNELLDYLSMKKDDKVIELLKKLDRIEFDPKKGTFKYLSTYDVHSPSELLKLLRSQVTFKGISCKDLKDGWPQCDETINQLEEDSKILVLRTKKDKTPRYVWYNSGGNLKCIDEEFVKMWENVQLPQFAELPRKLQDLGLKPASVDPATIKRQTKRVEVKKKRQRKGKITNTHMTGILKDYSHRV.

The segment at 32–105 (QKKTNDTVIT…SSPSKKVRPG (74 aa)) is disordered. Ser-52 is modified (phosphoserine). Residues 85–94 (LDDDDDDEDF) are compositionally biased toward acidic residues. 2 positions are modified to phosphoserine: Ser-97 and Ser-106. The segment at residues 113–187 (QANQTDISKS…FKYLSTYDVH (75 aa)) is a DNA-binding region (TFIIE beta).

It belongs to the TFIIE beta subunit family. In terms of assembly, TFIIE is a tetramer of two alpha (TFA1) and two beta (TFA2) subunits.

The protein resides in the nucleus. In terms of biological role, recruits TFIIH to the initiation complex and stimulates the RNA polymerase II C-terminal domain kinase and DNA-dependent ATPase activities of TFIIH. Both TFIIH and TFIIE are required for promoter clearance by RNA polymerase. This chain is Transcription initiation factor IIE subunit beta (TFA2), found in Saccharomyces cerevisiae (strain ATCC 204508 / S288c) (Baker's yeast).